The following is a 120-amino-acid chain: UPF0231 protein YacL (120 aa).

It belongs to the UPF0231 family.

In Shigella flexneri, this protein is UPF0231 protein YacL (yacL).